The sequence spans 484 residues: NADH-quinone oxidoreductase subunit N (484 aa).

The next 13 helical transmembrane spans lie at 10-30, 40-60, 74-94, 108-128, 129-149, 163-183, 203-223, 237-257, 272-292, 299-319, 327-347, 370-390, and 404-424; these read LALP…VDLF, FYLT…TQWG, SLGA…LAYT, FYLL…GGSL, LSLY…VAYH, FVLG…VYGA, LMLL…LGAA, PTPV…ALFM, EPML…IAIV, MLAY…TAGT, LFYT…ITVL, YAGV…TVGF, and GHIP…FYYL.

This sequence belongs to the complex I subunit 2 family. NDH-1 is composed of 14 different subunits. Subunits NuoA, H, J, K, L, M, N constitute the membrane sector of the complex.

The protein localises to the cell inner membrane. It carries out the reaction a quinone + NADH + 5 H(+)(in) = a quinol + NAD(+) + 4 H(+)(out). In terms of biological role, NDH-1 shuttles electrons from NADH, via FMN and iron-sulfur (Fe-S) centers, to quinones in the respiratory chain. The immediate electron acceptor for the enzyme in this species is believed to be ubiquinone. Couples the redox reaction to proton translocation (for every two electrons transferred, four hydrogen ions are translocated across the cytoplasmic membrane), and thus conserves the redox energy in a proton gradient. In Halorhodospira halophila (strain DSM 244 / SL1) (Ectothiorhodospira halophila (strain DSM 244 / SL1)), this protein is NADH-quinone oxidoreductase subunit N.